Here is a 275-residue protein sequence, read N- to C-terminus: Putative ABC transporter permease protein ORF2 (275 aa).

6 consecutive transmembrane segments (helical) span residues 11 to 31, 74 to 94, 108 to 128, 136 to 156, 185 to 205, and 239 to 259; these read YFIF…FMLF, IAVS…AFAF, LIIA…YVLT, TVFA…IFIL, ILLP…GTYL, and IPAI…AYIF. The region spanning 69–260 is the ABC transmembrane type-1 domain; that stretch reads LKNSVIAVSI…LPMLIAYIFG (192 aa).

It belongs to the binding-protein-dependent transport system permease family. MalFG subfamily.

Its subcellular location is the cell membrane. The chain is Putative ABC transporter permease protein ORF2 from Caldicellulosiruptor sp. (strain Rt8B.4).